The following is a 990-amino-acid chain: MDGNEIAHAKKLVYDLYSGSLSPSAIAATEKELQKAQRSQQGWNIGLFMLQSKDVYEQFFGALTLQMKINTQLETLSDKDLVQLFVQLLQKLLWDDGLPALVERKVICTLASLTIKYELEKKEEASLKVIYCLFCNKLEFFNADMNAASVLNNLFPPASSRNAQLTASYINELLLELSFSIYTKENEDALFNNVFRPCSNIIVSVLVFIFTNYSLDLSKEKNVAALEEALNCMIAISSYLAKASVSVQSVLPAFTECMDLTVNCIALDEVSEKAMNCLADLLANYSNFITQPTIERLWTILTGPWGETHLQQELEDPDSGEENDYSFLNIVIGFAEAMLPQIIDHIQEEKSIRLLYILASLLSFPGYAIVEEKVSWRTLEFWTTLIEDFSMSKAATDPSKDEIFKQIAFSVVEKAWWKMLLPSPEQWNSWPSSSRDSFNSYRRDLGDLLESSYSIFGERLYAMYITTIENFFSDGTGSPQSLEVSFYCLCCILEYDTNDSDTLDAWLTRLFETSFAIKASAFQNPQLLKTCSQLLSSCSCFLQNHPQYLNISLPVLFDALHISETSIQMTVSRSIHTLCTTCASHLLTEIDGFMAVVEELTPKLVYVPSVLEKIYSSVGYVTQRIEDIELRISYLMRLLNCILAQLQPSLYPNLEIFENVLKSCLQSVAGVALSQSPIGESPIIDVEQSTQETTFWQQSCIAEFQAKLISFLTHSESMALQYSDVVGLICKIMIAGLNEVEPSPFSLPIVTTIQYFCDRFTEFPAAVLLTLGSAILTCPYGQTDIIDKVLIDMCSSIQNSVVIINEESFMNNIDITVELYHFFSIILQKHPSFLETMYPDFTQLILNRAINLLGKPERLLESAAGQFIISFITSEKSDLLNTHTDFVNAIRSPLIAKILLGFGGNASRSSLPLLSDILGKLKAQNFSATRACLTQSLEEEGFPSRNVSNEIKRRFLTDLLKARIKDKVKQFWILCKGLESTPYGNSSWTF.

Belongs to the importin beta family.

It is found in the nucleus. In terms of biological role, functions as a component of the nuclear pore complex (NPC). NPC components, collectively referred to as nucleoporins (NUPs), can play the role of both NPC structural components and of docking or interaction partners for transiently associated nuclear transport factors. Active directional transport is assured by both, a Phe-Gly (FG) repeat affinity gradient for these transport factors across the NPC and a transport cofactor concentration gradient across the nuclear envelope. This chain is Importin beta-like protein kap111 (kap111), found in Schizosaccharomyces pombe (strain 972 / ATCC 24843) (Fission yeast).